A 173-amino-acid polypeptide reads, in one-letter code: dCTP deaminase, dUMP-forming (173 aa).

Residues 93-98 (RSSTGR), aspartate 111, 119-121 (TLE), glutamine 138, and tyrosine 151 contribute to the dCTP site. Catalysis depends on glutamate 121, which acts as the Proton donor/acceptor.

Belongs to the dCTP deaminase family. As to quaternary structure, homotrimer.

It catalyses the reaction dCTP + 2 H2O = dUMP + NH4(+) + diphosphate. It functions in the pathway pyrimidine metabolism; dUMP biosynthesis; dUMP from dCTP: step 1/1. In terms of biological role, bifunctional enzyme that catalyzes both the deamination of dCTP to dUTP and the hydrolysis of dUTP to dUMP without releasing the toxic dUTP intermediate. The sequence is that of dCTP deaminase, dUMP-forming from Clostridium botulinum (strain Alaska E43 / Type E3).